A 68-amino-acid chain; its full sequence is DNA gyrase inhibitor YacG (68 aa).

Cys10, Cys13, Cys29, and Cys33 together coordinate Zn(2+). Positions 45–68 (EKRIPSDTELSDSDEWSEEDPLKH) are disordered. The segment covering 53–68 (ELSDSDEWSEEDPLKH) has biased composition (acidic residues).

The protein belongs to the DNA gyrase inhibitor YacG family. In terms of assembly, interacts with GyrB. It depends on Zn(2+) as a cofactor.

Inhibits all the catalytic activities of DNA gyrase by preventing its interaction with DNA. Acts by binding directly to the C-terminal domain of GyrB, which probably disrupts DNA binding by the gyrase. This is DNA gyrase inhibitor YacG from Yersinia pseudotuberculosis serotype O:1b (strain IP 31758).